A 209-amino-acid polypeptide reads, in one-letter code: NDR1/HIN1-like protein 1 (209 aa).

The chain crosses the membrane as a helical span at residues 18-38 (IFWSIIFVLFIIFLTILLIWA). A glycan (N-linked (GlcNAc...) asparagine) is linked at N58.

Expressed in rosette leaves, cauline leaves, stems, and siliques, and at lower levels in roots and flowers.

The protein localises to the cell membrane. Functionally, may play a role in plant immunity. The protein is NDR1/HIN1-like protein 1 of Arabidopsis thaliana (Mouse-ear cress).